The sequence spans 213 residues: Golgi apparatus membrane protein TVP23 homolog A (213 aa).

The next 4 membrane-spanning stretches (helical) occupy residues 32–52 (PLAT…YVSC), 54–74 (WFSK…SLDF), 123–143 (IFWL…FSTL), and 150–170 (WLAL…GYIL).

It belongs to the TVP23 family.

The protein localises to the membrane. The polypeptide is Golgi apparatus membrane protein TVP23 homolog A (TVP23A) (Homo sapiens (Human)).